Consider the following 154-residue polypeptide: Hemiasterlin resistant protein 1 (154 aa).

2 disordered regions span residues 1–64 (MVRR…PGLM) and 86–109 (GMFT…PAGA). 3 stretches are compositionally biased toward low complexity: residues 7–28 (ASPS…SSFA), 48–57 (TPMGAPMGAP), and 96–109 (AEQA…PAGA). The CHCH domain occupies 116–154 (SQPCEFEWRQFVDCAQNQSDVSLCNGFNDIFKQCKARYA). 2 consecutive short sequence motifs (cx9C motif) follow at residues 119–129 (CEFEWRQFVDC) and 139–149 (CNGFNDIFKQC). Disulfide bonds link cysteine 119–cysteine 149 and cysteine 129–cysteine 139.

This Caenorhabditis elegans protein is Hemiasterlin resistant protein 1 (har-1).